The following is a 274-amino-acid chain: ATP synthase subunit a (274 aa).

Helical transmembrane passes span 43–63 (TLNI…LLVF), 103–123 (VIAP…MMDL), 149–169 (DVSI…FYSI), 223–243 (LIFI…LSVP), and 245–265 (AIFH…LTIV).

Belongs to the ATPase A chain family. F-type ATPases have 2 components, CF(1) - the catalytic core - and CF(0) - the membrane proton channel. CF(1) has five subunits: alpha(3), beta(3), gamma(1), delta(1), epsilon(1). CF(0) has three main subunits: a(1), b(2) and c(9-12). The alpha and beta chains form an alternating ring which encloses part of the gamma chain. CF(1) is attached to CF(0) by a central stalk formed by the gamma and epsilon chains, while a peripheral stalk is formed by the delta and b chains.

It is found in the cell inner membrane. In terms of biological role, key component of the proton channel; it plays a direct role in the translocation of protons across the membrane. In Yersinia pestis bv. Antiqua (strain Angola), this protein is ATP synthase subunit a.